Here is a 281-residue protein sequence, read N- to C-terminus: uncharacterized protein (281 aa).

This is an uncharacterized protein from Mycoplasma pneumoniae (strain ATCC 29342 / M129 / Subtype 1) (Mycoplasmoides pneumoniae).